The chain runs to 235 residues: Probable transcriptional regulatory protein CFF8240_0424 (235 aa).

Belongs to the TACO1 family.

It is found in the cytoplasm. In Campylobacter fetus subsp. fetus (strain 82-40), this protein is Probable transcriptional regulatory protein CFF8240_0424.